A 181-amino-acid polypeptide reads, in one-letter code: Oligoribonuclease (181 aa).

Residues 8-171 form the Exonuclease domain; it reads LIWVDLEMTG…EDIKESIAEM (164 aa). Residue Tyr129 is part of the active site.

Belongs to the oligoribonuclease family.

Its subcellular location is the cytoplasm. Its function is as follows. 3'-to-5' exoribonuclease specific for small oligoribonucleotides. The chain is Oligoribonuclease from Shewanella frigidimarina (strain NCIMB 400).